The sequence spans 503 residues: MRLLYSLFHCSAFLVGFTLSVGVLPIPNEHAASIKAKFDDYAEHYLLPEDFHNAETAPVKKPTDAEIESMQNSLLFEGDIMGVPEIEKSDILKRLRDDPLLDEDEIFRKPFHSALNLVTYPDKLWPEGQVPYMLEEGMTNDQRTAIAQAFDEYKTKTCVRFVPKTDDDFDYIYVKRNVAFGCSSYVGRAGGNQTVSLEVDKCFSKGIIAHELMHALGFFHEHSRTDRDDFVDINEDNIRPGMMRNFEKYPRKIIDSLGMPYDYESVMHYHKLAFSRNGKPTIIPKDNEADVGQRYKLSEMDSKKVNKLYQCGEYSKTSSTTTTTTTTTTTTTTEEPTTTTEVEEKPKDKKVSSTTTTTKKPTTTTTTTPKPVERSRNKKCEDLNAHCGMWEQLGHCQHSVKYMAHYCRKACNLCEVEVTTTTTTTPKPVPRNKEKENKSASSTTRGTSTATSTTPKTTTTTTSAPKEKCEDKNLFCSYWAKIGECNSESKFMKIFCKASCGKC.

The first 25 residues, 1–25, serve as a signal peptide directing secretion; the sequence is MRLLYSLFHCSAFLVGFTLSVGVLP. A Peptidase M12A domain is found at 116 to 312; the sequence is NLVTYPDKLW…KKVNKLYQCG (197 aa). 2 disulfides stabilise this stretch: cysteine 158-cysteine 311 and cysteine 182-cysteine 202. Residue asparagine 192 is glycosylated (N-linked (GlcNAc...) asparagine). Residue histidine 210 participates in Zn(2+) binding. Residue glutamate 211 is part of the active site. Residues histidine 214 and histidine 220 each contribute to the Zn(2+) site. The segment covering 317 to 340 has biased composition (low complexity); that stretch reads TSSTTTTTTTTTTTTTTEEPTTTT. The segment at 317–377 is disordered; it reads TSSTTTTTTT…TPKPVERSRN (61 aa). The segment covering 342–351 has biased composition (basic and acidic residues); that stretch reads VEEKPKDKKV. Over residues 352-370 the composition is skewed to low complexity; sequence SSTTTTTKKPTTTTTTTPK. 3 disulfide bridges follow: cysteine 380–cysteine 414, cysteine 387–cysteine 407, and cysteine 396–cysteine 411. The 35-residue stretch at 380–414 folds into the ShKT 1 domain; sequence CEDLNAHCGMWEQLGHCQHSVKYMAHYCRKACNLC. The disordered stretch occupies residues 422–464; sequence TTTTPKPVPRNKEKENKSASSTTRGTSTATSTTPKTTTTTTSA. Residue asparagine 437 is glycosylated (N-linked (GlcNAc...) asparagine). Residues 439–464 show a composition bias toward low complexity; the sequence is SASSTTRGTSTATSTTPKTTTTTTSA. 3 disulfide bridges follow: cysteine 469–cysteine 503, cysteine 476–cysteine 496, and cysteine 485–cysteine 500. Residues 469–503 form the ShKT 2 domain; it reads CEDKNLFCSYWAKIGECNSESKFMKIFCKASCGKC.

Zn(2+) is required as a cofactor. Expressed in pharyngeal muscles and mc cells.

The protein localises to the secreted. Functionally, metalloprotease. This Caenorhabditis elegans protein is Zinc metalloproteinase nas-14 (nas-14).